The following is a 193-amino-acid chain: Potassium-transporting ATPase KdpC subunit (193 aa).

A helical membrane pass occupies residues 14-34 (ITFTFLVLCGLVYPLIVTGIA).

It belongs to the KdpC family. In terms of assembly, the system is composed of three essential subunits: KdpA, KdpB and KdpC.

It is found in the cell membrane. Its function is as follows. Part of the high-affinity ATP-driven potassium transport (or Kdp) system, which catalyzes the hydrolysis of ATP coupled with the electrogenic transport of potassium into the cytoplasm. This subunit acts as a catalytic chaperone that increases the ATP-binding affinity of the ATP-hydrolyzing subunit KdpB by the formation of a transient KdpB/KdpC/ATP ternary complex. This chain is Potassium-transporting ATPase KdpC subunit, found in Bacillus anthracis (strain A0248).